The chain runs to 216 residues: Probable nicotinate-nucleotide adenylyltransferase (216 aa).

Belongs to the NadD family.

The catalysed reaction is nicotinate beta-D-ribonucleotide + ATP + H(+) = deamido-NAD(+) + diphosphate. It functions in the pathway cofactor biosynthesis; NAD(+) biosynthesis; deamido-NAD(+) from nicotinate D-ribonucleotide: step 1/1. Functionally, catalyzes the reversible adenylation of nicotinate mononucleotide (NaMN) to nicotinic acid adenine dinucleotide (NaAD). The chain is Probable nicotinate-nucleotide adenylyltransferase from Klebsiella pneumoniae (strain 342).